We begin with the raw amino-acid sequence, 657 residues long: Histidine ammonia-lyase (657 aa).

The 5-imidazolinone (Ala-Gly) cross-link spans 253 to 255 (ASG). Serine 254 carries the 2,3-didehydroalanine (Ser) modification. Threonine 396 is subject to Phosphothreonine. Serine 635 carries the post-translational modification Phosphoserine. A Phosphothreonine modification is found at threonine 637. A Phosphoserine modification is found at serine 648.

The protein belongs to the PAL/histidase family. Post-translationally, contains an active site 4-methylidene-imidazol-5-one (MIO), which is formed autocatalytically by cyclization and dehydration of residues Ala-Ser-Gly.

It catalyses the reaction L-histidine = trans-urocanate + NH4(+). The protein operates within amino-acid degradation; L-histidine degradation into L-glutamate; N-formimidoyl-L-glutamate from L-histidine: step 1/3. The sequence is that of Histidine ammonia-lyase (HAL) from Bos taurus (Bovine).